The sequence spans 289 residues: Acetyl-coenzyme A carboxylase carboxyl transferase subunit beta (289 aa).

The 267-residue stretch at 23 to 289 folds into the CoA carboxyltransferase N-terminal domain; it reads HWIKCPSCSA…YDENPCLLHL (267 aa). Cysteine 27, cysteine 30, cysteine 46, and cysteine 49 together coordinate Zn(2+). The segment at 27–49 adopts a C4-type zinc-finger fold; it reads CPSCSALMYYKEVIAQHHVCPKC.

This sequence belongs to the AccD/PCCB family. Acetyl-CoA carboxylase is a heterohexamer composed of biotin carboxyl carrier protein (AccB), biotin carboxylase (AccC) and two subunits each of ACCase subunit alpha (AccA) and ACCase subunit beta (AccD). The cofactor is Zn(2+).

Its subcellular location is the cytoplasm. The enzyme catalyses N(6)-carboxybiotinyl-L-lysyl-[protein] + acetyl-CoA = N(6)-biotinyl-L-lysyl-[protein] + malonyl-CoA. The protein operates within lipid metabolism; malonyl-CoA biosynthesis; malonyl-CoA from acetyl-CoA: step 1/1. In terms of biological role, component of the acetyl coenzyme A carboxylase (ACC) complex. Biotin carboxylase (BC) catalyzes the carboxylation of biotin on its carrier protein (BCCP) and then the CO(2) group is transferred by the transcarboxylase to acetyl-CoA to form malonyl-CoA. This Wolinella succinogenes (strain ATCC 29543 / DSM 1740 / CCUG 13145 / JCM 31913 / LMG 7466 / NCTC 11488 / FDC 602W) (Vibrio succinogenes) protein is Acetyl-coenzyme A carboxylase carboxyl transferase subunit beta.